A 386-amino-acid polypeptide reads, in one-letter code: 2-isopropylmalate synthase (386 aa).

Positions 12-265 constitute a Pyruvate carboxyltransferase domain; sequence VRIFDTTLRD…EVNIKTYKLY (254 aa). Positions 21, 203, 205, and 239 each coordinate a divalent metal cation.

This sequence belongs to the alpha-IPM synthase/homocitrate synthase family. Homodimer. A divalent metal cation is required as a cofactor.

The enzyme catalyses 3-methyl-2-oxobutanoate + acetyl-CoA + H2O = (2S)-2-isopropylmalate + CoA + H(+). The protein operates within amino-acid biosynthesis; L-leucine biosynthesis; L-leucine from 3-methyl-2-oxobutanoate: step 1/4. Its function is as follows. Catalyzes the condensation of the acetyl group of acetyl-CoA with 3-methyl-2-oxobutanoate (2-oxoisovalerate) to form 3-carboxy-3-hydroxy-4-methylpentanoate (2-isopropylmalate). Carries out the first step of the leucine biosynthesis pathway. The chain is 2-isopropylmalate synthase (leuA) from Sulfurisphaera tokodaii (strain DSM 16993 / JCM 10545 / NBRC 100140 / 7) (Sulfolobus tokodaii).